Consider the following 229-residue polypeptide: Enolase-phosphatase E1 (229 aa).

This sequence belongs to the HAD-like hydrolase superfamily. MasA/MtnC family. As to quaternary structure, monomer. The cofactor is Mg(2+).

It carries out the reaction 5-methylsulfanyl-2,3-dioxopentyl phosphate + H2O = 1,2-dihydroxy-5-(methylsulfanyl)pent-1-en-3-one + phosphate. It functions in the pathway amino-acid biosynthesis; L-methionine biosynthesis via salvage pathway; L-methionine from S-methyl-5-thio-alpha-D-ribose 1-phosphate: step 3/6. Its pathway is amino-acid biosynthesis; L-methionine biosynthesis via salvage pathway; L-methionine from S-methyl-5-thio-alpha-D-ribose 1-phosphate: step 4/6. Its function is as follows. Bifunctional enzyme that catalyzes the enolization of 2,3-diketo-5-methylthiopentyl-1-phosphate (DK-MTP-1-P) into the intermediate 2-hydroxy-3-keto-5-methylthiopentenyl-1-phosphate (HK-MTPenyl-1-P), which is then dephosphorylated to form the acireductone 1,2-dihydroxy-3-keto-5-methylthiopentene (DHK-MTPene). This is Enolase-phosphatase E1 from Yersinia pseudotuberculosis serotype IB (strain PB1/+).